The sequence spans 291 residues: tRNA-cytidine(32) 2-sulfurtransferase (291 aa).

The PP-loop motif signature appears at 36–41 (SGGKDS). [4Fe-4S] cluster-binding residues include Cys-111, Cys-114, and Cys-202. A disordered region spans residues 258–291 (RDPWLDAEDEEAEDCGEPPAGDGVVSLGGARGGR). Over residues 262–273 (LDAEDEEAEDCG) the composition is skewed to acidic residues.

This sequence belongs to the TtcA family. As to quaternary structure, homodimer. Requires Mg(2+) as cofactor. It depends on [4Fe-4S] cluster as a cofactor.

The protein resides in the cytoplasm. It catalyses the reaction cytidine(32) in tRNA + S-sulfanyl-L-cysteinyl-[cysteine desulfurase] + AH2 + ATP = 2-thiocytidine(32) in tRNA + L-cysteinyl-[cysteine desulfurase] + A + AMP + diphosphate + H(+). The protein operates within tRNA modification. Catalyzes the ATP-dependent 2-thiolation of cytidine in position 32 of tRNA, to form 2-thiocytidine (s(2)C32). The sulfur atoms are provided by the cysteine/cysteine desulfurase (IscS) system. This chain is tRNA-cytidine(32) 2-sulfurtransferase, found in Anaeromyxobacter dehalogenans (strain 2CP-1 / ATCC BAA-258).